The sequence spans 253 residues: Precorrin-4 C(11)-methyltransferase (253 aa).

This sequence belongs to the precorrin methyltransferase family.

The enzyme catalyses precorrin-4 + S-adenosyl-L-methionine = precorrin-5 + S-adenosyl-L-homocysteine. Its pathway is cofactor biosynthesis; adenosylcobalamin biosynthesis; cob(II)yrinate a,c-diamide from precorrin-2 (aerobic route): step 4/10. Its function is as follows. Catalyzes the methylation of C-11 in precorrin-4 to form precorrin-5. This Sinorhizobium sp protein is Precorrin-4 C(11)-methyltransferase (cobM).